The following is a 101-amino-acid chain: Urease subunit beta (101 aa).

It belongs to the urease beta subunit family. As to quaternary structure, heterotrimer of UreA (gamma), UreB (beta) and UreC (alpha) subunits. Three heterotrimers associate to form the active enzyme.

The protein localises to the cytoplasm. The enzyme catalyses urea + 2 H2O + H(+) = hydrogencarbonate + 2 NH4(+). It participates in nitrogen metabolism; urea degradation; CO(2) and NH(3) from urea (urease route): step 1/1. This is Urease subunit beta from Rhodopseudomonas palustris (strain ATCC BAA-98 / CGA009).